The primary structure comprises 376 residues: Cytoplasmic tRNA 2-thiolation protein 1 (376 aa).

It belongs to the TtcA family. CTU1/NCS6/ATPBD3 subfamily.

Its subcellular location is the cytoplasm. It participates in tRNA modification; 5-methoxycarbonylmethyl-2-thiouridine-tRNA biosynthesis. Its function is as follows. Plays a central role in 2-thiolation of mcm(5)S(2)U at tRNA wobble positions of tRNA(Lys), tRNA(Glu) and tRNA(Gln). Directly binds tRNAs and probably acts by catalyzing adenylation of tRNAs, an intermediate required for 2-thiolation. It is unclear whether it acts as a sulfurtransferase that transfers sulfur from thiocarboxylated URM1 onto the uridine of tRNAs at wobble position. Prior mcm(5) tRNA modification by the elongator complex is required for 2-thiolation. May also be involved in protein urmylation. The sequence is that of Cytoplasmic tRNA 2-thiolation protein 1 from Scheffersomyces stipitis (strain ATCC 58785 / CBS 6054 / NBRC 10063 / NRRL Y-11545) (Yeast).